Here is a 452-residue protein sequence, read N- to C-terminus: Na(+)/H(+) antiporter NhaA (452 aa).

A run of 11 helical transmembrane segments spans residues 23–43 (MMLF…LSTI), 71–91 (LLQF…GLEI), 108–128 (LPIV…LLVV), 136–156 (GAAI…AVLG), 165–185 (VFLT…IALF), 189–209 (HINI…YLMG), 216–236 (LGLY…SGIH), 316–336 (IVGY…TLGG), 349–369 (VFLG…YGFV), 385–405 (LMAV…IATL), and 418–438 (EAKL…IVTL).

This sequence belongs to the NhaA Na(+)/H(+) (TC 2.A.33) antiporter family.

The protein resides in the cell inner membrane. The enzyme catalyses Na(+)(in) + 2 H(+)(out) = Na(+)(out) + 2 H(+)(in). Its function is as follows. Na(+)/H(+) antiporter that extrudes sodium in exchange for external protons. The sequence is that of Na(+)/H(+) antiporter NhaA from Porphyromonas gingivalis (strain ATCC 33277 / DSM 20709 / CIP 103683 / JCM 12257 / NCTC 11834 / 2561).